The chain runs to 673 residues: UvrABC system protein B (673 aa).

The Helicase ATP-binding domain maps to 26–414 (ANFEAGLAKQ…AGEVTELVVR (389 aa)). 39 to 46 (GVTGSGKT) is an ATP binding site. The short motif at 92 to 115 (YYDYYQPEAYVPSSDTFIEKDSSI) is the Beta-hairpin element. Residues 431 to 597 (QVDDLMSEVH…SVERPIADIM (167 aa)) form the Helicase C-terminal domain. 2 stretches are compositionally biased toward basic and acidic residues: residues 600-609 (ARDDAAEKKS) and 618-628 (HVAEETPDYRA). Residues 600–628 (ARDDAAEKKSGKGRSKSRHVAEETPDYRA) are disordered. The UVR domain occupies 635 to 670 (AGKLKSLEQKMYQHAKDLEFEAAAQIRDQIQKLKAA).

This sequence belongs to the UvrB family. As to quaternary structure, forms a heterotetramer with UvrA during the search for lesions. Interacts with UvrC in an incision complex.

Its subcellular location is the cytoplasm. Functionally, the UvrABC repair system catalyzes the recognition and processing of DNA lesions. A damage recognition complex composed of 2 UvrA and 2 UvrB subunits scans DNA for abnormalities. Upon binding of the UvrA(2)B(2) complex to a putative damaged site, the DNA wraps around one UvrB monomer. DNA wrap is dependent on ATP binding by UvrB and probably causes local melting of the DNA helix, facilitating insertion of UvrB beta-hairpin between the DNA strands. Then UvrB probes one DNA strand for the presence of a lesion. If a lesion is found the UvrA subunits dissociate and the UvrB-DNA preincision complex is formed. This complex is subsequently bound by UvrC and the second UvrB is released. If no lesion is found, the DNA wraps around the other UvrB subunit that will check the other stand for damage. In Xanthomonas axonopodis pv. citri (strain 306), this protein is UvrABC system protein B.